The primary structure comprises 117 residues: Holo-[acyl-carrier-protein] synthase (117 aa).

2 residues coordinate Mg(2+): aspartate 8 and glutamate 59.

This sequence belongs to the P-Pant transferase superfamily. AcpS family. Mg(2+) is required as a cofactor.

Its subcellular location is the cytoplasm. The enzyme catalyses apo-[ACP] + CoA = holo-[ACP] + adenosine 3',5'-bisphosphate + H(+). Its function is as follows. Transfers the 4'-phosphopantetheine moiety from coenzyme A to a Ser of acyl-carrier-protein. The sequence is that of Holo-[acyl-carrier-protein] synthase from Staphylococcus carnosus (strain TM300).